The chain runs to 467 residues: Hydroxymethylglutaryl-CoA synthase erg13A (467 aa).

A35 is a (3S)-3-hydroxy-3-methylglutaryl-CoA binding site. The Proton donor/acceptor role is filled by E86. (3S)-3-hydroxy-3-methylglutaryl-CoA-binding residues include C118, T160, S209, H259, K268, N334, and S368. C118 functions as the Acyl-thioester intermediate in the catalytic mechanism. H259 (proton donor/acceptor) is an active-site residue.

This sequence belongs to the thiolase-like superfamily. HMG-CoA synthase family.

It carries out the reaction acetoacetyl-CoA + acetyl-CoA + H2O = (3S)-3-hydroxy-3-methylglutaryl-CoA + CoA + H(+). The protein operates within metabolic intermediate biosynthesis; (R)-mevalonate biosynthesis; (R)-mevalonate from acetyl-CoA: step 2/3. Hydroxymethylglutaryl-CoA synthase; part of the first module of ergosterol biosynthesis pathway that includes the early steps of the pathway, conserved across all eukaryotes, and which results in the formation of mevalonate from acetyl-coenzyme A (acetyl-CoA). Erg13A and erg13B condense acetyl-CoA with acetoacetyl-CoA to form hydroxymethylglutaryl-CoA (HMG-CoA). The first module starts with the action of the cytosolic acetyl-CoA acetyltransferase erg10B that catalyzes the formation of acetoacetyl-CoA. The hydroxymethylglutaryl-CoA synthases erg13A and erg13B then condense acetyl-CoA with acetoacetyl-CoA to form HMG-CoA. The rate-limiting step of the early module is the reduction to mevalonate by the 3-hydroxy-3-methylglutaryl-coenzyme A (HMG-CoA) reductases hmg1 and hmg2. Mevalonate is also a precursor for the extracellular siderophore triacetylfusarinine C (TAFC). This chain is Hydroxymethylglutaryl-CoA synthase erg13A, found in Aspergillus fumigatus (strain ATCC MYA-4609 / CBS 101355 / FGSC A1100 / Af293) (Neosartorya fumigata).